Consider the following 451-residue polypeptide: Mannan endo-1,6-alpha-mannosidase DCW1 (451 aa).

An N-terminal signal peptide occupies residues 1–21 (MLAVTFTAAAVLSLLAASGRT). 6 N-linked (GlcNAc...) asparagine glycosylation sites follow: Asn-84, Asn-109, Asn-203, Asn-242, Asn-267, and Asn-291. The tract at residues 397–419 (AMNGGTSPGDPAAGTKTKAENLP) is disordered. Asp-427 carries the GPI-anchor amidated aspartate lipid modification. A propeptide spans 428 to 451 (RAGAGIITALIGSSFLACTLWLII) (removed in mature form).

This sequence belongs to the glycosyl hydrolase 76 family.

The protein resides in the secreted. Its subcellular location is the cell wall. It is found in the cell membrane. The enzyme catalyses Random hydrolysis of (1-&gt;6)-alpha-D-mannosidic linkages in unbranched (1-&gt;6)-mannans.. Required for normal synthesis of the cell wall. The sequence is that of Mannan endo-1,6-alpha-mannosidase DCW1 (DCW1) from Eremothecium gossypii (strain ATCC 10895 / CBS 109.51 / FGSC 9923 / NRRL Y-1056) (Yeast).